The sequence spans 3971 residues: Mycosubtilin synthase subunit A (3971 aa).

The segment at 160–479 (EPEADELAFI…ELEDIDLGRV (320 aa)) is acyl-CoA ligase. One can recognise a Carrier 1 domain in the interval 578–653 (TPIHEIETAL…DLAAFLVENH (76 aa)). Serine 613 is subject to O-(pantetheine 4'-phosphoryl)serine. One can recognise a Ketosynthase family 3 (KS3) domain in the interval 669–1092 (SKDIAIIGMS…GTNAHVVLEE (424 aa)). Active-site for beta-ketoacyl synthase activity residues include cysteine 843, histidine 974, and histidine 1014. One can recognise a Carrier 2 domain in the interval 1290–1365 (THIESFLKTV…SVVDYLAENV (76 aa)). Residue serine 1324 is modified to O-(pantetheine 4'-phosphoryl)serine. Residues 1434–1456 (ESEISQDKTSLSPKSVTAKKNSA) form a disordered region. Residues 1440-1456 (DKTSLSPKSVTAKKNSA) are compositionally biased toward polar residues. The GSA-AT stretch occupies residues 1529–1856 (IIAERSDGSR…SYFEQSQVPI (328 aa)). N6-(pyridoxal phosphate)lysine is present on lysine 1759. The segment at 1921–1942 (GGFIPEGPDSPNDGGHKEPETY) is disordered. The segment at 1938–2240 (EPETYELSPE…NMVPVKNTAS (303 aa)) is condensation 1. One can recognise a Carrier 3 domain in the interval 2405-2480 (EPENETELQI…ELANFIRGEK (76 aa)). Position 2440 is an O-(pantetheine 4'-phosphoryl)serine (serine 2440). The tract at residues 2492-2781 (QKAFYRTSPA…QTMGIRTKPQ (290 aa)) is condensation 2. The tract at residues 2937–3823 (PHNDTVCQWF…RNHPAGRKIF (887 aa)) is domain 1 (asparagine-activating). Residues 2967–3364 (TYGQLNERVN…KVEAVQKAVV (398 aa)) form an adenylation 1 region. One can recognise a Carrier 4 domain in the interval 3442-3517 (PPGNEVESKL…QLANMALRME (76 aa)). Serine 3477 bears the O-(pantetheine 4'-phosphoryl)serine mark. A condensation 3 region spans residues 3529 to 3818 (KISYYPVSSA…NTLVIRNHPA (290 aa)).

Belongs to the ATP-dependent AMP-binding enzyme family. The cofactor is pyridoxal 5'-phosphate. Pantetheine 4'-phosphate is required as a cofactor.

This protein is a multifunctional enzyme, able to activate a long chain fatty acid and link it with the amino acid Asn as part of the synthesis of mycosubtilin. The activation sites consist of individual domains. In Bacillus subtilis, this protein is Mycosubtilin synthase subunit A (mycA).